Reading from the N-terminus, the 802-residue chain is Leucine--tRNA ligase (802 aa).

Residues 41-52 carry the 'HIGH' region motif; the sequence is PYPSGQGLHVGH. Residues 580-584 carry the 'KMSKS' region motif; that stretch reads KMSKS. Residue lysine 583 coordinates ATP.

Belongs to the class-I aminoacyl-tRNA synthetase family.

It is found in the cytoplasm. The enzyme catalyses tRNA(Leu) + L-leucine + ATP = L-leucyl-tRNA(Leu) + AMP + diphosphate. This Alkaliphilus oremlandii (strain OhILAs) (Clostridium oremlandii (strain OhILAs)) protein is Leucine--tRNA ligase.